A 463-amino-acid chain; its full sequence is Glycine--tRNA ligase (463 aa).

Positions 98 and 174 each coordinate substrate. ATP-binding positions include 206 to 208 (RNE), 216 to 221 (FRTREF), 290 to 291 (EL), and 334 to 337 (GADR). 221 to 225 (FEQME) provides a ligand contact to substrate. 330–334 (EPSLG) provides a ligand contact to substrate.

It belongs to the class-II aminoacyl-tRNA synthetase family. Homodimer.

Its subcellular location is the cytoplasm. The enzyme catalyses tRNA(Gly) + glycine + ATP = glycyl-tRNA(Gly) + AMP + diphosphate. Catalyzes the attachment of glycine to tRNA(Gly). This is Glycine--tRNA ligase from Staphylococcus epidermidis (strain ATCC 35984 / DSM 28319 / BCRC 17069 / CCUG 31568 / BM 3577 / RP62A).